We begin with the raw amino-acid sequence, 88 residues long: Small ribosomal subunit protein bS20 (88 aa).

Residues 1–33 (MANTSSAKKATRKIARRTAVNKSRRTQMRGSVR) are disordered.

It belongs to the bacterial ribosomal protein bS20 family.

In terms of biological role, binds directly to 16S ribosomal RNA. This Rhodopseudomonas palustris (strain BisB5) protein is Small ribosomal subunit protein bS20.